The chain runs to 161 residues: Lipoprotein signal peptidase (161 aa).

A run of 3 helical transmembrane segments spans residues 4-24, 61-81, and 87-107; these read LLVV…WSKY, KMIF…YLLI, and SIWY…NFID. Residues Asp-116 and Asp-132 contribute to the active site. A helical transmembrane segment spans residues 127 to 147; the sequence is IFNVADSTLVVGVICIFIYLI.

Belongs to the peptidase A8 family.

The protein localises to the cell membrane. It catalyses the reaction Release of signal peptides from bacterial membrane prolipoproteins. Hydrolyzes -Xaa-Yaa-Zaa-|-(S,diacylglyceryl)Cys-, in which Xaa is hydrophobic (preferably Leu), and Yaa (Ala or Ser) and Zaa (Gly or Ala) have small, neutral side chains.. Its pathway is protein modification; lipoprotein biosynthesis (signal peptide cleavage). Its function is as follows. This protein specifically catalyzes the removal of signal peptides from prolipoproteins. The protein is Lipoprotein signal peptidase of Enterococcus faecalis (strain ATCC 700802 / V583).